The sequence spans 228 residues: Cytidylate kinase (228 aa).

Position 17 to 25 (17 to 25 (GPTASGKGT)) interacts with ATP.

Belongs to the cytidylate kinase family. Type 1 subfamily.

It is found in the cytoplasm. The enzyme catalyses CMP + ATP = CDP + ADP. It catalyses the reaction dCMP + ATP = dCDP + ADP. The sequence is that of Cytidylate kinase from Burkholderia mallei (strain NCTC 10247).